The chain runs to 224 residues: Glycerol-3-phosphate acyltransferase (224 aa).

6 helical membrane-spanning segments follow: residues 3–23 (IFLS…IGSL), 54–74 (VFGY…VVFA), 90–112 (LYFY…PIYF), 127–147 (LISI…LLLF), 152–172 (VSLS…IPWM), and 183–203 (GFGQ…LIFW).

Belongs to the PlsY family. In terms of assembly, probably interacts with PlsX.

The protein localises to the cell membrane. The catalysed reaction is an acyl phosphate + sn-glycerol 3-phosphate = a 1-acyl-sn-glycero-3-phosphate + phosphate. The protein operates within lipid metabolism; phospholipid metabolism. In terms of biological role, catalyzes the transfer of an acyl group from acyl-phosphate (acyl-PO(4)) to glycerol-3-phosphate (G3P) to form lysophosphatidic acid (LPA). This enzyme utilizes acyl-phosphate as fatty acyl donor, but not acyl-CoA or acyl-ACP. In Mycoplasmopsis synoviae (strain 53) (Mycoplasma synoviae), this protein is Glycerol-3-phosphate acyltransferase.